Here is a 350-residue protein sequence, read N- to C-terminus: MDSFHPTPGKPTTATSNSSLNFFVRNREKSIRCSSLHQTFTAPSPEASPSIGLRYVNYSMSDETDESMFPLDSELTDMEDDDTEYISDSTTDLPSAAMARGTRQLSYNENLDQRSFSKTPNKHIEVKNLKDLCSPSHSGRISKSLCPVLRRKSLLPKPKMFQRVASALYEESSPLELEIRSESEFSKMFFEPKKSSSFVSRAASPAMVGPGVPFYSSITGANGNVLAPSGSLKAVENSDVIESSAEDSSNTDNPSTKPSNEMPISPLLSSSVFFKDTEMSTPNSNHSRSRTPSSKKRTRWGEEIIDLSKRRAVSPSIYYDLDKKCSPIHSVMVSPLKIKDTHEVLMNLKL.

Disordered stretches follow at residues 1 to 21, 237 to 266, and 278 to 298; these read MDSF…SSLN, NSDV…PISP, and EMST…KKRT. Composition is skewed to polar residues over residues 10 to 21 and 246 to 259; these read KPTTATSNSSLN and EDSS…TKPS. A compositionally biased stretch (basic residues) spans 287–298; it reads SRSRTPSSKKRT.

It is found in the nucleus. This is an uncharacterized protein from Schizosaccharomyces pombe (strain 972 / ATCC 24843) (Fission yeast).